Consider the following 563-residue polypeptide: NADPH oxidase 1 (563 aa).

At 1-8 (MGNWLVNH) the chain is on the cytoplasmic side. Residues 9 to 31 (WLSVLFLVSWLGLNIFLFVYVFL) form a helical membrane-spanning segment. The Extracellular segment spans residues 32 to 44 (NYEKSDKYYYTRE). A helical transmembrane segment spans residues 45 to 69 (ILGTALALARASALCLNFNSMVILI). The 229-residue stretch at 54–282 (RASALCLNFN…LAPIAFYIFE (229 aa)) folds into the Ferric oxidoreductase domain. The Cytoplasmic portion of the chain corresponds to 70–102 (PVCRNLLSFLRGTCSFCNHTLRKPLDHNLTFHK). Heme is bound by residues H101 and H115. A helical membrane pass occupies residues 103-123 (LVAYMICIFTAIHIIAHLFNF). At 124 to 167 (ERYSRSQQAMDGSLASVLSSLFHPEKEDSWLNPIQSPNVTVMYA) the chain is on the extracellular side. N161 is a glycosylation site (N-linked (GlcNAc...) asparagine). Residues 168–188 (AFTSIAGLTGVVATVALVLMV) traverse the membrane as a helical segment. Over 189 to 206 (TSAMEFIRRNYFELFWYT) the chain is Cytoplasmic. A helical membrane pass occupies residues 207-227 (HHLFIIYIICLGIHGLGGIVR). The heme site is built by H208 and H220. Topologically, residues 228-395 (GQTEESMSES…TVSEDVFQYE (168 aa)) are extracellular. N241 carries N-linked (GlcNAc...) asparagine glycosylation. Positions 283-390 (RILRFYRSRQ…DGPFGTVSED (108 aa)) constitute an FAD-binding FR-type domain. 337–343 (HPFTLTS) contributes to the FAD binding site. Residues 396–416 (VAVLVGAGIGVTPFASFLKSI) traverse the membrane as a helical segment. The interval 396-535 (VAVLVGAGIG…GVFLCGPPTL (140 aa)) is interaction with NOXO1. Residues 417-563 (WYKFQRAHNK…VQFYFNKETF (147 aa)) are Cytoplasmic-facing. T429 is modified (phosphothreonine; by PKC/PRKCB).

As to quaternary structure, NOX1, NOXA1, NOXO1, RAC1 and CYBA forms a functional multimeric complex supporting ROS production. Interacts with NOXO1. Interacts (via FAD-binding FR-type domain) with ARHGEF7 (via PH domain). The phosphorylated form at Thr-429 interacts with NOXA1 with greater affinity. The cofactor is FAD. Phosphorylation at Thr-429 mediated by PKC/PRKBC positively regulates its interaction with NOXA1 and enzyme activity. As to expression, expressed in vascular smooth muscle cells.

Its subcellular location is the cell projection. It is found in the invadopodium membrane. The protein resides in the cell membrane. The catalysed reaction is NADPH + 2 O2 = 2 superoxide + NADP(+) + H(+). Its activity is regulated as follows. The oxidase activity is potentiated by NOXA1 and NOXO1. Functionally, NADPH oxidase that catalyzes the generation of superoxide from molecular oxygen utilizing NADPH as an electron donor. This chain is NADPH oxidase 1 (Nox1), found in Rattus norvegicus (Rat).